A 493-amino-acid polypeptide reads, in one-letter code: Glutamate--tRNA ligase (493 aa).

A 'HIGH' region motif is present at residues 10-20; sequence PSPTGTPHVGL. The short motif at 254 to 258 is the 'KMSKS' region element; that stretch reads KLSKR. Lysine 257 serves as a coordination point for ATP.

The protein belongs to the class-I aminoacyl-tRNA synthetase family. Glutamate--tRNA ligase type 1 subfamily. As to quaternary structure, monomer.

Its subcellular location is the cytoplasm. It catalyses the reaction tRNA(Glu) + L-glutamate + ATP = L-glutamyl-tRNA(Glu) + AMP + diphosphate. In terms of biological role, catalyzes the attachment of glutamate to tRNA(Glu) in a two-step reaction: glutamate is first activated by ATP to form Glu-AMP and then transferred to the acceptor end of tRNA(Glu). This is Glutamate--tRNA ligase from Corynebacterium glutamicum (strain ATCC 13032 / DSM 20300 / JCM 1318 / BCRC 11384 / CCUG 27702 / LMG 3730 / NBRC 12168 / NCIMB 10025 / NRRL B-2784 / 534).